The primary structure comprises 511 residues: Zinc finger CCCH-type with G patch domain-containing protein (511 aa).

An N-acetylmethionine modification is found at M1. S70 is subject to Phosphoserine. The tract at residues 92–129 is disordered; it reads PGAPCNDSETAPGSEVQPGSTSSALEEEEEDPDLEELS. Residues 98 to 115 show a composition bias toward polar residues; sequence DSETAPGSEVQPGSTSSA. Positions 116–127 are enriched in acidic residues; sequence LEEEEEDPDLEE. The segment at 174-200 adopts a C3H1-type zinc-finger fold; the sequence is KSLKPCPFFLEGKCRFKENCRFSHGQV. The segment at 266-291 is disordered; that stretch reads PPLRTEATESSDSDTGDASDSSYARV. S276 is subject to Phosphoserine. At T280 the chain carries Phosphothreonine. One can recognise a G-patch domain in the interval 313 to 359; it reads TRGIGSKLLVKMGYEFGKGLGRHAEGRVEPIHAVVLPRGKSLDQCAE. S353 carries the phosphoserine modification. 2 disordered regions span residues 363–393 and 490–511; these read KKTKRGQAGSNRPPKCRRSGSRPEGRPPPRN and AQEADLQRKQRKADTHRKMTEF. Basic and acidic residues predominate over residues 491-511; that stretch reads QEADLQRKQRKADTHRKMTEF.

Interacts with CHD4/Mi-2; the interaction is direct.

The protein localises to the nucleus. Transcription repressor that specifically binds the 5'-GGAG[GA]A[GA]A-3' consensus sequence. Represses transcription by recruiting the chromatin multiprotein complex NuRD to target promoters. Negatively regulates expression of EGFR, a gene involved in cell proliferation, survival and migration. Its ability to repress genes of the EGFR pathway suggest it may act as a tumor suppressor. This is Zinc finger CCCH-type with G patch domain-containing protein (Zgpat) from Mus musculus (Mouse).